The following is a 562-amino-acid chain: uncharacterized protein (562 aa).

5 helical membrane-spanning segments follow: residues 15-34, 41-63, 78-97, 104-126, and 165-187; these read WGGGVAHSVLILSLVIAFGI, VAGISLGVTWILFVGIVFGHFNL, LILFVYSIGLQVGPGFFSAF, LNMLAMIVVFAGVIITLALHFIT, and IALGYAVAYPLGVVGCIMSLLGL. RCK C-terminal domains lie at 204-286 and 289-374; these read QGLG…ITAF and KPIE…VLGN. 6 helical membrane-spanning segments follow: residues 384 to 403, 413 to 430, 450 to 472, 476 to 498, 505 to 524, and 539 to 561; these read LIPIFLGIALGCILGSIPFM, LGLAGGPLIVSILISRFG, IGISLFLACVGLGAGDGFVETII, GYVWIAYGMIITIVPLLLAGFIG, NYYTLIGVLAGSTTNPPALA, and YATVYPLTMFLRVLTAQLLILSL.

This sequence belongs to the AAE transporter (TC 2.A.81) family.

It is found in the cell membrane. This is an uncharacterized protein from Bacteroides fragilis (strain YCH46).